The following is a 177-amino-acid chain: Coatomer subunit zeta-1 (177 aa).

The protein belongs to the adaptor complexes small subunit family. As to quaternary structure, oligomeric complex that consists of at least the alpha, beta, beta', gamma, delta, epsilon and zeta subunits.

The protein resides in the cytoplasm. It localises to the golgi apparatus membrane. The protein localises to the cytoplasmic vesicle. Its subcellular location is the COPI-coated vesicle membrane. Its function is as follows. The coatomer is a cytosolic protein complex that binds to dilysine motifs and reversibly associates with Golgi non-clathrin-coated vesicles, which further mediate biosynthetic protein transport from the ER, via the Golgi up to the trans Golgi network. Coatomer complex is required for budding from Golgi membranes, and is essential for the retrograde Golgi-to-ER transport of dilysine-tagged proteins. The zeta subunit may be involved in regulating the coat assembly and, hence, the rate of biosynthetic protein transport due to its association-dissociation properties with the coatomer complex. This is Coatomer subunit zeta-1 (COPZ1) from Oryza sativa subsp. japonica (Rice).